Here is a 363-residue protein sequence, read N- to C-terminus: Aminomethyltransferase (363 aa).

Belongs to the GcvT family. The glycine cleavage system is composed of four proteins: P, T, L and H.

The catalysed reaction is N(6)-[(R)-S(8)-aminomethyldihydrolipoyl]-L-lysyl-[protein] + (6S)-5,6,7,8-tetrahydrofolate = N(6)-[(R)-dihydrolipoyl]-L-lysyl-[protein] + (6R)-5,10-methylene-5,6,7,8-tetrahydrofolate + NH4(+). The glycine cleavage system catalyzes the degradation of glycine. This Dechloromonas aromatica (strain RCB) protein is Aminomethyltransferase.